The chain runs to 747 residues: ATPase family gene 2 protein homolog B (747 aa).

M1 carries the post-translational modification N-acetylmethionine. ATP contacts are provided by residues 234 to 241 (GPPGVGKT) and 500 to 507 (GPPGCAKT).

It belongs to the AAA ATPase family. AFG2 subfamily. As to quaternary structure, part of the 55LCC heterohexameric ATPase complex composed at least of AIRIM, AFG2A, AFG2B and CINP. Associates with pre-60S ribosomal particles. As to expression, expressed in neurons; also expressed at lower level in astrocytes, oligodendrocytes and microglia.

The protein localises to the cytoplasm. Its subcellular location is the cytoskeleton. The protein resides in the spindle. It localises to the nucleus. It catalyses the reaction ATP + H2O = ADP + phosphate + H(+). With respect to regulation, in the context of 55LCC heterohexameric ATPase complex, the ATPase activity is stimulated by DNA binding and inhibited in presence of RNA. Functionally, ATP-dependent chaperone part of the 55LCC heterohexameric ATPase complex which is chromatin-associated and promotes replisome proteostasis to maintain replication fork progression and genome stability. Required for replication fork progression, sister chromatid cohesion, and chromosome stability. The ATPase activity is specifically enhanced by replication fork DNA and is coupled to cysteine protease-dependent cleavage of replisome substrates in response to replication fork damage. Uses ATPase activity to process replisome substrates in S-phase, facilitating their proteolytic turnover from chromatin to ensure DNA replication and mitotic fidelity. Plays an essential role in the cytoplasmic maturation steps of pre-60S ribosomal particles by promoting the release of shuttling protein RSL24D1/RLP24 from the pre-ribosomal particles. This Rattus norvegicus (Rat) protein is ATPase family gene 2 protein homolog B (Afg2b).